Here is a 2890-residue protein sequence, read N- to C-terminus: Bifunctional DNA-directed RNA polymerase subunit beta-beta' (2890 aa).

The interval 1–1377 (MSKKIPLKNR…DINIFGDDVD (1377 aa)) is DNA-directed RNA polymerase subunit beta. The interval 1384–2890 (PIMIKEDDRP…LRALEDNSKF (1507 aa)) is DNA-directed RNA polymerase subunit beta'. Zn(2+)-binding residues include Cys1449, Cys1451, Cys1465, and Cys1468. Mg(2+) is bound by residues Asp1849, Asp1851, and Asp1853. 4 residues coordinate Zn(2+): Cys2179, Cys2253, Cys2260, and Cys2263.

The protein in the N-terminal section; belongs to the RNA polymerase beta chain family. This sequence in the C-terminal section; belongs to the RNA polymerase beta' chain family. As to quaternary structure, the RNAP catalytic core consists of 2 alpha, 1 beta/beta' and 1 omega subunit. When a sigma factor is associated with the core the holoenzyme is formed, which can initiate transcription. Mg(2+) is required as a cofactor. Zn(2+) serves as cofactor.

It catalyses the reaction RNA(n) + a ribonucleoside 5'-triphosphate = RNA(n+1) + diphosphate. Functionally, DNA-dependent RNA polymerase catalyzes the transcription of DNA into RNA using the four ribonucleoside triphosphates as substrates. The chain is Bifunctional DNA-directed RNA polymerase subunit beta-beta' (rpoBC) from Helicobacter pylori (strain J99 / ATCC 700824) (Campylobacter pylori J99).